A 638-amino-acid polypeptide reads, in one-letter code: MSTGVQTKAAPGAGQHADGPRLLADIGGTNARFALETSPGEIGSVKVYPCADYPGVAEVIKRYLKDTKIGRVNHAAIAIANPVDGDQVSMTNHDWSFSIEATRRALGFDTLLVVNDFTALAMALPGLTDAQRVQVGGGTRRPNSVIGLLGPGTGMGVSGLIPADDRWIALGSEGGHATFAPADEREDIVLQYARKKWSHVSFERVAAGPGIEVIYRALAGRDKKRVAANVDTIEIVKRAMEGEPLAAESVDVFCGILGTFAGNIAVTLGALGGIYIGGGVVPRLGELFARSSFRKRFEAKGRFEAYLQNVPTYVITAEYPAFLGVSAILAEQLSNRAGGSSSAVFERIRQMRDALTPAERRVADLALNHPRSIINDPIVDIARKADVSQPTVIRFCRSLGCQGLSDFKLKLATGLTGTIPVSHSQVHLGDTATDFGAKVLDNTVSAILQLREHLNFEHVERAIDLLNGARRIEFYGLGNSNIVAQDAHYKFFRFGIPTIAYGDLYMQAASAALLGKGDVIVAVSKSGRAPELLRVLDVAMQAGAKVIAITSSNTPLAKRATVALETDHIEIRESQLSMISRILHLVMIDILAVGVAIRRAVPSADVAETVAKARQGADDDATAVLDWLSHGAASSARD.

A disordered region spans residues 1–20; it reads MSTGVQTKAAPGAGQHADGP. Residues 1 to 341 form a glucokinase region; sequence MSTGVQTKAA…QLSNRAGGSS (341 aa). ATP is bound at residue 24–29; sequence ADIGGT. One can recognise an HTH rpiR-type domain in the interval 342-418; that stretch reads SAVFERIRQM…LKLATGLTGT (77 aa). The putative HTH-type transcriptional regulator stretch occupies residues 342–638; the sequence is SAVFERIRQM…SHGAASSARD (297 aa). A DNA-binding region (H-T-H motif) is located at residues 378–397; sequence IVDIARKADVSQPTVIRFCR. The region spanning 462 to 601 is the SIS domain; that stretch reads AIDLLNGARR…AVGVAIRRAV (140 aa).

The protein in the N-terminal section; belongs to the bacterial glucokinase family.

Its subcellular location is the cytoplasm. The enzyme catalyses D-glucose + ATP = D-glucose 6-phosphate + ADP + H(+). The chain is Bifunctional protein glk (glk) from Paraburkholderia xenovorans (strain LB400).